Consider the following 584-residue polypeptide: POTE ankyrin domain family member D (584 aa).

ANK repeat units follow at residues 172 to 201 (EKRT…QLNV), 205 to 234 (KKRT…DRNI), 238 to 267 (YGNT…DIES), 271 to 300 (CGLT…NLNV), 304 to 333 (YGRT…DVSS), and 337 to 366 (SGQT…KQML). The disordered stretch occupies residues 369-502 (SSENSNPEQD…ILTNKQKQIE (134 aa)). Composition is skewed to basic and acidic residues over residues 377–392 (QDLK…RLKV), 401–412 (MSQEPEINKDCD), and 466–481 (EEYH…KQLS). The span at 482–498 (EEQNTGISQDEILTNKQ) shows a compositional bias: polar residues. Residues 494-583 (LTNKQKQIEV…LNEEALTKTN (90 aa)) adopt a coiled-coil conformation.

It belongs to the POTE family. Expressed in prostate, ovary, testis, placenta and prostate cancer cell lines. Localizes to basal and terminal prostate epithelial cells.

The protein resides in the cell membrane. The chain is POTE ankyrin domain family member D (POTED) from Homo sapiens (Human).